The sequence spans 515 residues: Glucose-6-phosphate 1-dehydrogenase X (515 aa).

N-acetylalanine is present on Ala2. NADP(+)-binding positions include 38–45 (GASGDLAK), Arg72, Tyr147, and Lys171. Residues Lys171, 201 to 205 (HYLGK), Glu239, and Asp258 contribute to the D-glucose 6-phosphate site. The active-site Proton acceptor is the His263. Arg357 lines the NADP(+) pocket. The D-glucose 6-phosphate site is built by Lys360 and Arg365. NADP(+) contacts are provided by Lys366, Arg370, and Arg393. D-glucose 6-phosphate is bound at residue Gln395. Residues 401–403 (YTK), 421–423 (DLT), Arg487, and Tyr503 each bind NADP(+). Tyr507 is modified (phosphotyrosine). Trp509 lines the NADP(+) pocket.

The protein belongs to the glucose-6-phosphate dehydrogenase family. In terms of assembly, homotetramer; dimer of dimers. Interacts with SIRT2; the interaction is enhanced by H(2)O(2) treatment. Forms a ternary complex with ALDOB and TP53; this interaction is direct. ALDOB stabilizes the complex inhibiting G6PD activity and keeping oxidative pentose phosphate metabolism in check. Acetylated by ELP3 at Lys-403; acetylation inhibits its homodimerization and enzyme activity. Deacetylated by SIRT2 at Lys-403; deacetylation stimulates its enzyme activity.

Its subcellular location is the cytoplasm. It localises to the cytosol. It is found in the membrane. The catalysed reaction is D-glucose 6-phosphate + NADP(+) = 6-phospho-D-glucono-1,5-lactone + NADPH + H(+). It participates in carbohydrate degradation; pentose phosphate pathway; D-ribulose 5-phosphate from D-glucose 6-phosphate (oxidative stage): step 1/3. Its function is as follows. Catalyzes the rate-limiting step of the oxidative pentose-phosphate pathway, which represents a route for the dissimilation of carbohydrates besides glycolysis. The main function of this enzyme is to provide reducing power (NADPH) and pentose phosphates for fatty acid and nucleic acid synthesis. This chain is Glucose-6-phosphate 1-dehydrogenase X (G6pdx), found in Mus musculus (Mouse).